The primary structure comprises 846 residues: uncharacterized protein (846 aa).

WD repeat units lie at residues 88 to 129 (TKHI…LLYD), 132 to 172 (EHSR…STIT), 175 to 215 (GNSE…LPFL), 219 to 258 (AHNG…KKSL), 262 to 309 (NNVS…IPYR), and 313 to 348 (CHDS…NAFN). The segment at 541-560 (PREASTPSESSNSSIESEDN) is disordered. Over residues 544 to 555 (ASTPSESSNSSI) the composition is skewed to low complexity. The WD 7 repeat unit spans residues 624–663 (FHRSSVTSASIKSREAVLSAGNSSRRASIFLDQLSLHGDT).

This is an uncharacterized protein from Schizosaccharomyces pombe (strain 972 / ATCC 24843) (Fission yeast).